The following is a 367-amino-acid chain: tRNA/tmRNA (uracil-C(5))-methyltransferase (367 aa).

Residues Gln-189, Tyr-217, Asn-222, Glu-238, and Asp-298 each coordinate S-adenosyl-L-methionine. Catalysis depends on Cys-323, which acts as the Nucleophile. The active-site Proton acceptor is Glu-357.

It belongs to the class I-like SAM-binding methyltransferase superfamily. RNA M5U methyltransferase family. TrmA subfamily.

The enzyme catalyses uridine(54) in tRNA + S-adenosyl-L-methionine = 5-methyluridine(54) in tRNA + S-adenosyl-L-homocysteine + H(+). The catalysed reaction is uridine(341) in tmRNA + S-adenosyl-L-methionine = 5-methyluridine(341) in tmRNA + S-adenosyl-L-homocysteine + H(+). Functionally, dual-specificity methyltransferase that catalyzes the formation of 5-methyluridine at position 54 (m5U54) in all tRNAs, and that of position 341 (m5U341) in tmRNA (transfer-mRNA). The chain is tRNA/tmRNA (uracil-C(5))-methyltransferase from Pseudoalteromonas translucida (strain TAC 125).